The sequence spans 379 residues: UDP-N-acetylglucosamine--N-acetylmuramyl-(pentapeptide) pyrophosphoryl-undecaprenol N-acetylglucosamine transferase (379 aa).

Residues 13-15 (TGG), Asn123, Arg166, Ser194, and Gln295 each bind UDP-N-acetyl-alpha-D-glucosamine.

It belongs to the glycosyltransferase 28 family. MurG subfamily.

It is found in the cell inner membrane. The enzyme catalyses di-trans,octa-cis-undecaprenyl diphospho-N-acetyl-alpha-D-muramoyl-L-alanyl-D-glutamyl-meso-2,6-diaminopimeloyl-D-alanyl-D-alanine + UDP-N-acetyl-alpha-D-glucosamine = di-trans,octa-cis-undecaprenyl diphospho-[N-acetyl-alpha-D-glucosaminyl-(1-&gt;4)]-N-acetyl-alpha-D-muramoyl-L-alanyl-D-glutamyl-meso-2,6-diaminopimeloyl-D-alanyl-D-alanine + UDP + H(+). The protein operates within cell wall biogenesis; peptidoglycan biosynthesis. Functionally, cell wall formation. Catalyzes the transfer of a GlcNAc subunit on undecaprenyl-pyrophosphoryl-MurNAc-pentapeptide (lipid intermediate I) to form undecaprenyl-pyrophosphoryl-MurNAc-(pentapeptide)GlcNAc (lipid intermediate II). In Rhodospirillum centenum (strain ATCC 51521 / SW), this protein is UDP-N-acetylglucosamine--N-acetylmuramyl-(pentapeptide) pyrophosphoryl-undecaprenol N-acetylglucosamine transferase.